Consider the following 246-residue polypeptide: MIYSPTEQFEIKPLLTVNNMLTLSVNNYVMYVALVVTLMYSSVFLLNRTYLGFNRWGVALLAVYDTILNMVKSQMGARGGMYFPFMFTLFTFMLVANLVSMMPYSFAMSAQLVAIVSFSLSLWFGCVLMGLSKHGWGFFALFVPGGTPLALVPVLVLIETLSYSSRAISLGLRLSANVLSGHLLMLILGTLMFNLMGSSMLGFMGGFMPVMGVIAIVVTEFAIGMMQAYVFTILLSSYIKDSVYLH.

Positions 1-3 (MIY) are cleaved as a propeptide — removed in mature form. 7 helical membrane-spanning segments follow: residues 25–45 (VNNY…SVFL), 51–71 (LGFN…LNMV), 79–99 (GGMY…ANLV), 112–132 (LVAI…MGLS), 138–158 (FFAL…LVLI), 178–198 (VLSG…LMGS), and 203–223 (FMGG…EFAI).

It belongs to the ATPase A chain family. As to quaternary structure, F-type ATPases have 2 components, CF(1) - the catalytic core - and CF(0) - the membrane proton channel. CF(1) has five subunits: alpha(3), beta(3), gamma(1), delta(1), epsilon(1). CF(0) has three main subunits: a, b and c.

The protein localises to the mitochondrion inner membrane. Mitochondrial membrane ATP synthase (F(1)F(0) ATP synthase or Complex V) produces ATP from ADP in the presence of a proton gradient across the membrane which is generated by electron transport complexes of the respiratory chain. F-type ATPases consist of two structural domains, F(1) - containing the extramembraneous catalytic core and F(0) - containing the membrane proton channel, linked together by a central stalk and a peripheral stalk. During catalysis, ATP synthesis in the catalytic domain of F(1) is coupled via a rotary mechanism of the central stalk subunits to proton translocation. Key component of the proton channel; it may play a direct role in the translocation of protons across the membrane. The chain is ATP synthase subunit a (ATP6) from Debaryomyces hansenii (strain ATCC 36239 / CBS 767 / BCRC 21394 / JCM 1990 / NBRC 0083 / IGC 2968) (Yeast).